A 428-amino-acid polypeptide reads, in one-letter code: Enolase (428 aa).

Position 163 (Q163) interacts with (2R)-2-phosphoglycerate. Residue E205 is the Proton donor of the active site. Mg(2+) is bound by residues D242, E285, and D312. 4 residues coordinate (2R)-2-phosphoglycerate: K337, R366, S367, and K388. The active-site Proton acceptor is K337.

This sequence belongs to the enolase family. The cofactor is Mg(2+).

It localises to the cytoplasm. The protein resides in the secreted. It is found in the cell surface. The enzyme catalyses (2R)-2-phosphoglycerate = phosphoenolpyruvate + H2O. Its pathway is carbohydrate degradation; glycolysis; pyruvate from D-glyceraldehyde 3-phosphate: step 4/5. Catalyzes the reversible conversion of 2-phosphoglycerate (2-PG) into phosphoenolpyruvate (PEP). It is essential for the degradation of carbohydrates via glycolysis. The chain is Enolase from Neisseria meningitidis serogroup C / serotype 2a (strain ATCC 700532 / DSM 15464 / FAM18).